The chain runs to 239 residues: Outer membrane protein PagN (239 aa).

Positions 1–22 are cleaved as a signal peptide; it reads MKNFFAVCIIPLVVAWSATASA. Over 23 to 26 the chain is Periplasmic; that stretch reads KEGI. A beta stranded membrane pass occupies residues 27-36; it reads YITGKAGTSV. Residues 37-65 are Extracellular-facing; it reads VNVYGINSTFSQDEIVNGHATLPDRTKGV. A beta stranded transmembrane segment spans residues 66–76; it reads FGGGVAIGYDF. Residues 77–81 are Periplasmic-facing; the sequence is YDPFQ. Residues 82–92 form a beta stranded membrane-spanning segment; sequence LPVRLELDTTF. Residues 93 to 120 lie on the Extracellular side of the membrane; that stretch reads RGETDAKGGQDIIAFGDPVHINVKNQVR. Residues 121–132 form a beta stranded membrane-spanning segment; sequence MTTYMVNGYYDF. Topologically, residues 133–137 are periplasmic; that stretch reads HNSTA. Residues 138 to 148 traverse the membrane as a beta stranded segment; that stretch reads FTPYISAGVGL. Topologically, residues 149-174 are extracellular; that stretch reads AHVKLSNNTIPVGFGINETLSASKNN. Residues 175 to 185 traverse the membrane as a beta stranded segment; the sequence is FAWGAGIGAKY. The Periplasmic portion of the chain corresponds to 186–190; sequence AVTDN. A beta stranded transmembrane segment spans residues 191-200; the sequence is IMIDASYKYI. Topologically, residues 201-230 are extracellular; it reads NAGKVSISKNHYAGDEHTAYDADTKAASND. The chain crosses the membrane as a beta stranded span at residues 231–239; it reads FMLGITYAF.

The protein localises to the cell outer membrane. Haemagglutinin that facilitates the adhesion to and invasion of epithelial mammalian cells. Utilizes heparinated proteoglycan as a receptor to successfully invade host cells. This Salmonella typhimurium (strain LT2 / SGSC1412 / ATCC 700720) protein is Outer membrane protein PagN (pagN).